Here is a 529-residue protein sequence, read N- to C-terminus: Plexin domain-containing protein 2 (529 aa).

Residues 1 to 30 (MARFPKADLAAAGVMLLCHFFTDQFQFADG) form the signal peptide. Residues 31 to 454 (KPGDQILDWQ…AEKKGGTLHA (424 aa)) lie on the Extracellular side of the membrane. Residues 80 to 104 (ASVGQDSPEPRSFTDLLLDDGQDNN) form a disordered region. N103 and N160 each carry an N-linked (GlcNAc...) asparagine glycan. A PSI domain is found at 327 to 372 (TCLQFNRCGPCVSSQIGFNCSWCSKLQRCSSGFDRHRQDWVDSGCP). A helical membrane pass occupies residues 455–475 (GLIIGILILVLIVATAILVTV). Topologically, residues 476-529 (YMYHHPTSAASIFFIERRPSRWPAMKFRRGSGHPAYAEVEPVGEKEGFIVSEQC) are cytoplasmic. At S506 the chain carries Phosphoserine.

Belongs to the plexin family. In terms of assembly, interacts with CTTN. Expressed in the endothelial cells of the stroma but not in the endothelial cells of normal colonic tissue.

The protein localises to the membrane. Its function is as follows. May play a role in tumor angiogenesis. The polypeptide is Plexin domain-containing protein 2 (PLXDC2) (Homo sapiens (Human)).